Consider the following 245-residue polypeptide: 3-deoxy-manno-octulosonate cytidylyltransferase (245 aa).

Belongs to the KdsB family.

It is found in the cytoplasm. It catalyses the reaction 3-deoxy-alpha-D-manno-oct-2-ulosonate + CTP = CMP-3-deoxy-beta-D-manno-octulosonate + diphosphate. Its pathway is nucleotide-sugar biosynthesis; CMP-3-deoxy-D-manno-octulosonate biosynthesis; CMP-3-deoxy-D-manno-octulosonate from 3-deoxy-D-manno-octulosonate and CTP: step 1/1. The protein operates within bacterial outer membrane biogenesis; lipopolysaccharide biosynthesis. Its function is as follows. Activates KDO (a required 8-carbon sugar) for incorporation into bacterial lipopolysaccharide in Gram-negative bacteria. The polypeptide is 3-deoxy-manno-octulosonate cytidylyltransferase (Rhodopseudomonas palustris (strain BisB5)).